Here is a 597-residue protein sequence, read N- to C-terminus: Translation initiation factor IF-2 (597 aa).

2 stretches are compositionally biased toward low complexity: residues 57–73 and 81–95; these read GGDA…AATA and TPAA…PASD. The disordered stretch occupies residues 57 to 96; the sequence is GGDAAPAAASAPAAATAEPEEADETPAAAAQADAEPASDL. The region spanning 98 to 271 is the tr-type G domain; it reads HRAPVVTIMG…ELEDLRADPK (174 aa). The segment at 107-114 is G1; the sequence is GHVDHGKT. GTP is bound at residue 107–114; sequence GHVDHGKT. The G2 stretch occupies residues 132 to 136; the sequence is GITQH. The G3 stretch occupies residues 153 to 156; sequence DTPG. GTP-binding positions include 153–157 and 207–210; these read DTPGH and NKVD. The segment at 207 to 210 is G4; the sequence is NKVD. A G5 region spans residues 243-245; it reads SAK.

Belongs to the TRAFAC class translation factor GTPase superfamily. Classic translation factor GTPase family. IF-2 subfamily.

It is found in the cytoplasm. In terms of biological role, one of the essential components for the initiation of protein synthesis. Protects formylmethionyl-tRNA from spontaneous hydrolysis and promotes its binding to the 30S ribosomal subunits. Also involved in the hydrolysis of GTP during the formation of the 70S ribosomal complex. The protein is Translation initiation factor IF-2 of Deinococcus radiodurans (strain ATCC 13939 / DSM 20539 / JCM 16871 / CCUG 27074 / LMG 4051 / NBRC 15346 / NCIMB 9279 / VKM B-1422 / R1).